Consider the following 519-residue polypeptide: Protein nucleotidyltransferase YdiU (519 aa).

Residues Gly-100, Gly-102, Arg-103, Lys-123, Asp-135, Gly-136, Arg-193, and Arg-200 each contribute to the ATP site. Asp-270 serves as the catalytic Proton acceptor. Mg(2+) is bound by residues Asn-271 and Asp-280. Residue Asp-280 participates in ATP binding.

The protein belongs to the SELO family. Requires Mg(2+) as cofactor. Mn(2+) serves as cofactor.

The catalysed reaction is L-seryl-[protein] + ATP = 3-O-(5'-adenylyl)-L-seryl-[protein] + diphosphate. It carries out the reaction L-threonyl-[protein] + ATP = 3-O-(5'-adenylyl)-L-threonyl-[protein] + diphosphate. It catalyses the reaction L-tyrosyl-[protein] + ATP = O-(5'-adenylyl)-L-tyrosyl-[protein] + diphosphate. The enzyme catalyses L-histidyl-[protein] + UTP = N(tele)-(5'-uridylyl)-L-histidyl-[protein] + diphosphate. The catalysed reaction is L-seryl-[protein] + UTP = O-(5'-uridylyl)-L-seryl-[protein] + diphosphate. It carries out the reaction L-tyrosyl-[protein] + UTP = O-(5'-uridylyl)-L-tyrosyl-[protein] + diphosphate. Functionally, nucleotidyltransferase involved in the post-translational modification of proteins. It can catalyze the addition of adenosine monophosphate (AMP) or uridine monophosphate (UMP) to a protein, resulting in modifications known as AMPylation and UMPylation. The protein is Protein nucleotidyltransferase YdiU of Xylella fastidiosa (strain Temecula1 / ATCC 700964).